The chain runs to 1441 residues: Histone-lysine N-methyltransferase SETD5 (1441 aa).

The disordered stretch occupies residues 1–28 (MSIAIPLGVTTPDTSYSDMAAGSDPESV). Position 70 is a phosphothreonine (Leu70). Phosphoserine occurs at positions 72 and 74. The segment at 156–202 (TPTSITLTVRRTKPKKRKKSPEKGRAAPKTKKIKNSPSEAQNLDENT) is disordered. The segment covering 165–189 (RRTKPKKRKKSPEKGRAAPKTKKIK) has biased composition (basic residues). Positions 190–202 (NSPSEAQNLDENT) are enriched in polar residues. An SET domain is found at 269–390 (MQLQLGRVTR…KDAEVTIAFD (122 aa)). 2 disordered regions span residues 417-683 (NPNA…TVIS) and 793-816 (MTQT…ETSN). Acidic residues-rich tracts occupy residues 450-461 (LEQQNEVPEENP) and 479-501 (EEVD…DDQE). Low complexity-rich tracts occupy residues 539 to 552 (SSSD…SSEI) and 561 to 572 (AAPESEVSSPVS). Residues 575-588 (AIPSTPQSTGVNTR) show a composition bias toward polar residues. Basic residues predominate over residues 611–621 (SRPRPKSRISR). The span at 635 to 650 (QAIAQQAELSQAALEE) shows a compositional bias: low complexity. The span at 652-683 (GSNNSVTPPEAGNTDSSGENRQLTGSDPTVIS) shows a compositional bias: polar residues. 2 positions are modified to phosphoserine: Ser829 and Ser852. Disordered stretches follow at residues 849-883 (QPLS…ECRN), 1036-1228 (DLSR…SKGA), and 1243-1441 (CDSP…TGLS). Residue Thr855 is modified to Phosphothreonine. The span at 1062 to 1076 (QRKKVSLLEYRKRKQ) shows a compositional bias: basic residues. The span at 1087–1107 (DSSQSKSKSSGAGQGSSNSVS) shows a compositional bias: low complexity. Positions 1144-1163 (PSDSRGTSSSHCRPQENISS) are enriched in polar residues. Residue Ser1197 is modified to Phosphoserine. Low complexity predominate over residues 1250-1259 (SQSLLQQSSS). Positions 1265-1275 (PTQSPGYSYRT) are enriched in polar residues. Residues 1284–1300 (PSHGSSESSLSSTSYPS) are compositionally biased toward low complexity. Polar residues predominate over residues 1319–1333 (YYSSQPHSGNSTGSN). Residues 1335–1372 (PRRSCSSSAASPTPQGPSDSPTSDSVSQSSTGTLSSTS) are compositionally biased toward low complexity. 3 stretches are compositionally biased toward polar residues: residues 1373–1382 (FPQNSRSSLP), 1389–1412 (SLPN…NSQH), and 1429–1441 (LQGS…TGLS).

As to quaternary structure, interacts with components of the PAF1 complex (PAF1C) such as LEO1, CTR9 and CDC73. Interacts with NCOR1. Interacts with HDAC3. As to expression, ubiquitously expressed.

It is found in the nucleus. The protein resides in the chromosome. It catalyses the reaction L-lysyl(9)-[histone H3] + S-adenosyl-L-methionine = N(6)-methyl-L-lysyl(9)-[histone H3] + S-adenosyl-L-homocysteine + H(+). The enzyme catalyses L-lysyl(36)-[histone H3] + 3 S-adenosyl-L-methionine = N(6),N(6),N(6)-trimethyl-L-lysyl(36)-[histone H3] + 3 S-adenosyl-L-homocysteine + 3 H(+). Its function is as follows. Chromatin regulator required for brain development: acts as a regulator of RNA elongation rate, thereby regulating neural stem cell (NSC) proliferation and synaptic transmission. May act by mediating trimethylation of 'Lys-36' of histone H3 (H3K36me3), which is essential to allow on-time RNA elongation dynamics. Also monomethylates 'Lys-9' of histone H3 (H3K9me1) in vitro. The relevance of histone methyltransferase activity is however subject to discussion. The sequence is that of Histone-lysine N-methyltransferase SETD5 from Mus musculus (Mouse).